Reading from the N-terminus, the 69-residue chain is Pleurain-A3 (69 aa).

A signal peptide spans 1–22 (MFTLKKTLLLLFFLGTISISLC). Positions 23–43 (KQARDADEDDGRKMTEEEVKR) are excised as a propeptide. Cys-63 and Cys-69 are oxidised to a cystine.

This sequence belongs to the frog skin active peptide (FSAP) family. Pleurain subfamily. Expressed by the skin glands.

It localises to the secreted. Antimicrobial peptide. Has activity against Gram-positive and -negative bacteria, and fungi. Has little hemolytic activity on red blood cells. In Nidirana pleuraden (Yunnan pond frog), this protein is Pleurain-A3.